The following is a 682-amino-acid chain: uncharacterized protein (682 aa).

This is an uncharacterized protein from Saccharomyces cerevisiae (strain ATCC 204508 / S288c) (Baker's yeast).